The sequence spans 323 residues: Phosphatidylethanolamine:ceramide ethanolaminephosphotransferase (323 aa).

Residues 1–26 are Cytoplasmic-facing; sequence MAVPPVEMYSGSFWNRMRKPLPLRTQ. The helical transmembrane segment at 27–47 threads the bilayer; it reads VIRFTVVFVIVSFILVVALQI. Residues 48–74 are Extracellular-facing; it reads THERMPDPKVTKPLPDLGFELLTKVPG. The helical transmembrane segment at 75-95 threads the bilayer; that stretch reads MYVLADCCIGFLNILSVFTAF. Residues 96–147 lie on the Cytoplasmic side of the membrane; the sequence is KLYLLHRHCVGSGEPELPCNIPGVSRFFLSVWLCKENCRIELRNIHTIAWIR. Residues 148-168 traverse the membrane as a helical segment; that stretch reads FITSYALLLLSRSIIMVVTSL. Topologically, residues 169–187 are extracellular; it reads PNPDDLCQNPPKIENRVKD. Residues 188-208 form a helical membrane-spanning segment; sequence ILLTVLTAGAGSIHCGDLMYS. Residues 209 to 233 are Cytoplasmic-facing; sequence GHTVILTLHLMFHWIYGAMVHWSFR. Residues 234–254 traverse the membrane as a helical segment; that stretch reads PVVTVVAIFGYYCIVASRFHY. Topologically, residues 255–257 are extracellular; sequence TDD. A helical transmembrane segment spans residues 258–278; the sequence is VLVAIYLTIATFIAVGHNADG. Over 279–323 the chain is Cytoplasmic; the sequence is APWQLQLFIRWWPCCGANSREVAEDGVPVAIVIKNEEMMNFEGKS.

It belongs to the sphingomyelin synthase family.

Its subcellular location is the membrane. It catalyses the reaction an N-acylsphing-4-enine + a 1,2-diacyl-sn-glycero-3-phosphoethanolamine = an N-acylsphing-4-enine 1-phosphoethanolamine + a 1,2-diacyl-sn-glycerol. It carries out the reaction an N-acylsphinganine + a 1,2-diacyl-sn-glycero-3-phosphoethanolamine = an N-acylsphinganine-1-phosphoethanolamine + a 1,2-diacyl-sn-glycerol. In terms of biological role, predominantly synthesizes ethanolamine-phosphorylceramide (EPC), with minimal sphingomyelin (SM)/inositol phosphorylceramide (IPC) synthase activity. Specificity is likely to be defined by residues in the lumenal catalytic domain that interact with the polar head groups of the phospholipid donors. EPC is synthesized by both stages of the parasite life cycle, bloodstream forms (BSF) and procyclic forms (PCF), by transferring the phosphoethanolamine from a 1,2-diacyl-sn-glycero-3-phosphoethanolamine to an N-acylsphing-4-enine (ceramide) or an N-acylsphinganine (dihydroceramide). Similarly, SM is synthesized by transferring the phosphocholine from a 1,2-diacyl-sn-glycero-3-phosphocholine to ceramide or dihydroceramide by BSF and PCF, while IPC is confined to PCF. The ceramide/dihydroceramide ratios are skewed towards dihydroceramide in PCF parasites and ceramide in BSF parasites, this is likely due to differential expression and/or regulation of dihydroceramide desaturase, the enzyme responsible for converting dihydroceramide to ceramide. The sequence is that of Phosphatidylethanolamine:ceramide ethanolaminephosphotransferase from Trypanosoma brucei brucei.